Consider the following 425-residue polypeptide: Lipoyl synthase, mitochondrial (425 aa).

A mitochondrion-targeting transit peptide spans 1–33 (MAASSTRLRCLYASSSTWKTSPSQSLISLSRRY). A disordered region spans residues 17–55 (TWKTSPSQSLISLSRRYATTSSAPPTPSDESSSTLPKRR). Residues 33–51 (YATTSSAPPTPSDESSSTL) are compositionally biased toward polar residues. Positions 142, 147, 153, 173, 177, 180, and 388 each coordinate [4Fe-4S] cluster. The Radical SAM core domain maps to 156 to 377 (GSDKSAATAT…RQRALEMGFL (222 aa)).

It belongs to the radical SAM superfamily. Lipoyl synthase family. [4Fe-4S] cluster serves as cofactor.

It localises to the mitochondrion. It carries out the reaction [[Fe-S] cluster scaffold protein carrying a second [4Fe-4S](2+) cluster] + N(6)-octanoyl-L-lysyl-[protein] + 2 oxidized [2Fe-2S]-[ferredoxin] + 2 S-adenosyl-L-methionine + 4 H(+) = [[Fe-S] cluster scaffold protein] + N(6)-[(R)-dihydrolipoyl]-L-lysyl-[protein] + 4 Fe(3+) + 2 hydrogen sulfide + 2 5'-deoxyadenosine + 2 L-methionine + 2 reduced [2Fe-2S]-[ferredoxin]. The protein operates within protein modification; protein lipoylation via endogenous pathway; protein N(6)-(lipoyl)lysine from octanoyl-[acyl-carrier-protein]: step 2/2. In terms of biological role, catalyzes the radical-mediated insertion of two sulfur atoms into the C-6 and C-8 positions of the octanoyl moiety bound to the lipoyl domains of lipoate-dependent enzymes, thereby converting the octanoylated domains into lipoylated derivatives. This is Lipoyl synthase, mitochondrial from Talaromyces marneffei (strain ATCC 18224 / CBS 334.59 / QM 7333) (Penicillium marneffei).